The following is a 664-amino-acid chain: DNA ligase (664 aa).

Residues 32–36, 81–82, and glutamate 113 each bind NAD(+); these read DAEYD and SL. Catalysis depends on lysine 115, which acts as the N6-AMP-lysine intermediate. NAD(+) contacts are provided by arginine 136, glutamate 173, lysine 289, and lysine 313. Zn(2+)-binding residues include cysteine 407, cysteine 410, cysteine 425, and cysteine 431. The BRCT domain maps to 586–664; sequence ASEQPFAGKT…EEQLQAALQS (79 aa).

Belongs to the NAD-dependent DNA ligase family. LigA subfamily. The cofactor is Mg(2+). Mn(2+) is required as a cofactor.

The catalysed reaction is NAD(+) + (deoxyribonucleotide)n-3'-hydroxyl + 5'-phospho-(deoxyribonucleotide)m = (deoxyribonucleotide)n+m + AMP + beta-nicotinamide D-nucleotide.. In terms of biological role, DNA ligase that catalyzes the formation of phosphodiester linkages between 5'-phosphoryl and 3'-hydroxyl groups in double-stranded DNA using NAD as a coenzyme and as the energy source for the reaction. It is essential for DNA replication and repair of damaged DNA. This Aeromonas salmonicida (strain A449) protein is DNA ligase.